Consider the following 396-residue polypeptide: Protein Njmu-R1 (396 aa).

The tract at residues 1–78 (MLPSLQESMD…SGDDFSLSLA (78 aa)) is disordered. A phosphoserine mark is found at serine 8 and serine 18. Acidic residues predominate over residues 9–24 (MDGDEKELESSEEGGS). Residues 58-67 (GSPSGTNAET) are compositionally biased toward polar residues.

In terms of assembly, component of the complex WDR11 composed of C17orf75, FAM91A1 and WDR11; FAM91A1 and WDR11 are required for proper location of the complex. Interacts with TBC1D23; this interaction may be indirect and recruits TBC1D23 to AP-1-derived vesicles. In terms of tissue distribution, highly expressed in testis and also expressed in fetal testis.

It localises to the golgi apparatus. It is found in the trans-Golgi network. The protein localises to the cytoplasmic vesicle. In terms of biological role, as component of the WDR11 complex acts together with TBC1D23 to facilitate the golgin-mediated capture of vesicles generated using AP-1. May have a role in spermatogenesis. This chain is Protein Njmu-R1 (C17orf75), found in Homo sapiens (Human).